The chain runs to 195 residues: Putative kinase protein 143R (195 aa).

Residue 8–16 (GIIGAGKST) coordinates ATP. Residues Glu-31, Tyr-43, and Gln-54 each coordinate substrate. Residue Glu-78 is the Proton acceptor of the active site. Substrate-binding residues include Arg-79 and Glu-142.

The protein belongs to the DCK/DGK family.

In Acheta domesticus (House cricket), this protein is Putative kinase protein 143R.